A 232-amino-acid polypeptide reads, in one-letter code: Ribonuclease 3 (232 aa).

In terms of domain architecture, RNase III spans 5 to 134; that stretch reads QTVLKNHFAI…FLGALLLDKD (130 aa). Residue Glu47 coordinates Mg(2+). Asp51 is a catalytic residue. Mg(2+) contacts are provided by Asp120 and Glu123. The active site involves Glu123. In terms of domain architecture, DRBM spans 160 to 229; that stretch reads DYKTHLQELL…AKNAVEKGLD (70 aa).

Belongs to the ribonuclease III family. As to quaternary structure, homodimer. Requires Mg(2+) as cofactor.

It is found in the cytoplasm. The catalysed reaction is Endonucleolytic cleavage to 5'-phosphomonoester.. Digests double-stranded RNA. Involved in the processing of primary rRNA transcript to yield the immediate precursors to the large and small rRNAs (23S and 16S). Processes some mRNAs, and tRNAs when they are encoded in the rRNA operon. Processes pre-crRNA and tracrRNA of type II CRISPR loci if present in the organism. This is Ribonuclease 3 from Streptococcus pneumoniae serotype 4 (strain ATCC BAA-334 / TIGR4).